A 573-amino-acid polypeptide reads, in one-letter code: Phosphoenolpyruvate-protein phosphotransferase (573 aa).

The active-site Tele-phosphohistidine intermediate is H190. R297 and R332 together coordinate phosphoenolpyruvate. Mg(2+)-binding residues include E431 and D455. Phosphoenolpyruvate-binding positions include 454–455 and R465; that span reads ND. C502 (proton donor) is an active-site residue.

The protein belongs to the PEP-utilizing enzyme family. In terms of assembly, homodimer. The cofactor is Mg(2+).

Its subcellular location is the cytoplasm. It carries out the reaction L-histidyl-[protein] + phosphoenolpyruvate = N(pros)-phospho-L-histidyl-[protein] + pyruvate. With respect to regulation, irreversibly inhibited the sulfhydryl reagent N-ethylmaleimide (NEM). Its function is as follows. General (non sugar-specific) component of the phosphoenolpyruvate-dependent sugar phosphotransferase system (sugar PTS). This major carbohydrate active-transport system catalyzes the phosphorylation of incoming sugar substrates concomitantly with their translocation across the cell membrane. Enzyme I transfers the phosphoryl group from phosphoenolpyruvate (PEP) to the phosphoryl carrier protein (HPr). The sequence is that of Phosphoenolpyruvate-protein phosphotransferase (ptsI) from Mycoplasma capricolum subsp. capricolum (strain California kid / ATCC 27343 / NCTC 10154).